Reading from the N-terminus, the 1610-residue chain is Protein TASOR (1610 aa).

The tract at residues 1–96 (MATAAETEAP…PERPFRRSFQ (96 aa)) is disordered. At Ala2 the chain carries N-acetylalanine. Over residues 41–51 (NGGGDGGGGAG) the composition is skewed to gly residues. Residues 52–61 (PEETAAAEAA) show a composition bias toward low complexity. A Phosphoserine modification is found at Ser339. A Glycyl lysine isopeptide (Lys-Gly) (interchain with G-Cter in SUMO2) cross-link involves residue Lys581. Residues Ser628, Ser631, and Ser668 each carry the phosphoserine modification. Disordered stretches follow at residues 631 to 671 (SDYE…SLDY) and 687 to 710 (KKNV…RKLE). Basic and acidic residues-rich tracts occupy residues 652-671 (NSRD…SLDY) and 697-710 (EDTK…RKLE). At Ser793 the chain carries Phosphoserine. Residues Lys816 and Lys825 each participate in a glycyl lysine isopeptide (Lys-Gly) (interchain with G-Cter in SUMO2) cross-link. Ser836 carries the post-translational modification Phosphoserine. Lys866 participates in a covalent cross-link: Glycyl lysine isopeptide (Lys-Gly) (interchain with G-Cter in SUMO2). The tract at residues 915–941 (TGGNAGSPEDQHGKHGEKQTPDTLKGT) is disordered. A phosphoserine mark is found at Ser921 and Lys928. Residues 923–934 (EDQHGKHGEKQT) are compositionally biased toward basic and acidic residues. Thr1004 bears the Phosphothreonine mark. 2 positions are modified to phosphoserine: Ser1059 and Ser1508.

Belongs to the TASOR family. In terms of assembly, component of the HUSH complex; at least composed of TASOR, PPHLN1 and MPHOSPH8. Interacts with MORC2; the interaction associateS MORC2 with the HUSH complex which recruits MORC2 to heterochromatic loci. Interacts with ZNF638; leading to recruitment of the HUSH complex to unintegrated retroviral DNA. Interacts with INPP5A, EML1, SV1L, GPSM2, ITGB3BP, CNTN1, ETFA, PSMD8, S100A10, MPHOSPH8, TMEM100, ALB, PARPBP, HCFC2, NCBP1 and SETDB1. As to expression, present in skin, brain and testis (at protein level). Ubiquitously expressed at low levels in the majority of the organs, expressed at higher levels in kidneys, spleen, thymus, seminal vesicles, uterus, and ovaries and its expression is almost six times higher in male tissues than in females. Highly expressed in seminiferous tubules with a strong signal in Sertoli cells, spermatogonia, and spermatocytes.

The protein localises to the nucleus. It localises to the chromosome. Component of the HUSH complex, a multiprotein complex that mediates epigenetic repression. The HUSH complex is recruited to genomic loci rich in H3K9me3 and is required to maintain transcriptional silencing by promoting recruitment of SETDB1, a histone methyltransferase that mediates further deposition of H3K9me3, as well as MORC2. Also represses L1 retrotransposons in collaboration with MORC2 and, probably, SETDB1, the silencing is dependent of repressive epigenetic modifications, such as H3K9me3 mark. Silencing events often occur within introns of transcriptionally active genes, and lead to the down-regulation of host gene expression. The HUSH complex is also involved in the silencing of unintegrated retroviral DNA by being recruited by ZNF638: some part of the retroviral DNA formed immediately after infection remains unintegrated in the host genome and is transcriptionally repressed. Plays a crucial role in early embryonic development. Involved in the organization of spindle poles and spindle apparatus assembly during zygotic division. Plays an important role in maintaining epiblast fitness or potency. This chain is Protein TASOR, found in Mus musculus (Mouse).